Reading from the N-terminus, the 362-residue chain is Porin Omp2b (362 aa).

The N-terminal stretch at 1-22 (MNIKSLLLGSAAALVAASGAQA) is a signal peptide.

Belongs to the alphaproteobacteria porin family. In terms of assembly, homotrimer.

It localises to the cell outer membrane. Forms passive diffusion pores that allow small molecular weight hydrophilic materials across the outer membrane. The polypeptide is Porin Omp2b (omp2b) (Brucella neotomae).